The following is a 523-amino-acid chain: 2-isopropylmalate synthase (523 aa).

Residues 5-267 enclose the Pyruvate carboxyltransferase domain; sequence VIIFDTTLRD…HTAINHQEIW (263 aa). Mn(2+) is bound by residues Asp-14, His-202, His-204, and Asn-238. The segment at 392–523 is regulatory domain; the sequence is RLDYFSVQSG…QHNENNKETV (132 aa).

Belongs to the alpha-IPM synthase/homocitrate synthase family. LeuA type 1 subfamily. Homodimer. Requires Mn(2+) as cofactor.

It localises to the cytoplasm. It catalyses the reaction 3-methyl-2-oxobutanoate + acetyl-CoA + H2O = (2S)-2-isopropylmalate + CoA + H(+). The protein operates within amino-acid biosynthesis; L-leucine biosynthesis; L-leucine from 3-methyl-2-oxobutanoate: step 1/4. Functionally, catalyzes the condensation of the acetyl group of acetyl-CoA with 3-methyl-2-oxobutanoate (2-ketoisovalerate) to form 3-carboxy-3-hydroxy-4-methylpentanoate (2-isopropylmalate). The protein is 2-isopropylmalate synthase of Escherichia coli O81 (strain ED1a).